Reading from the N-terminus, the 48-residue chain is Omega-agatoxin-Aa5a (48 aa).

Cystine bridges form between cysteine 3–cysteine 16, cysteine 10–cysteine 21, cysteine 15–cysteine 32, and cysteine 23–cysteine 30.

Belongs to the neurotoxin 02 (plectoxin) family. In terms of tissue distribution, expressed by the venom gland.

It localises to the secreted. Its function is as follows. The toxin blocks voltage-gated calcium channels in rat cerebellar granule cells (IC(50)=200 nM). The chain is Omega-agatoxin-Aa5a from Agelenopsis aperta (North American funnel-web spider).